A 617-amino-acid polypeptide reads, in one-letter code: Probable translation initiation factor IF-2 (617 aa).

The tr-type G domain occupies 14-231; that stretch reads LRQPIVVVLG…VLAGLTQTYL (218 aa). A G1 region spans residues 23-30; it reads GHVDHGKT. 23–30 lines the GTP pocket; sequence GHVDHGKT. Residues 48–52 are G2; the sequence is GITQH. The segment at 87-90 is G3; it reads DTPG. Residues 87–91 and 141–144 each bind GTP; these read DTPGH and NKID. The G4 stretch occupies residues 141-144; it reads NKID. A G5 region spans residues 209–211; it reads SAR.

It belongs to the TRAFAC class translation factor GTPase superfamily. Classic translation factor GTPase family. IF-2 subfamily.

Functionally, function in general translation initiation by promoting the binding of the formylmethionine-tRNA to ribosomes. Seems to function along with eIF-2. In Aeropyrum pernix (strain ATCC 700893 / DSM 11879 / JCM 9820 / NBRC 100138 / K1), this protein is Probable translation initiation factor IF-2 (infB).